We begin with the raw amino-acid sequence, 483 residues long: Teichuronic acid biosynthesis protein TuaB (483 aa).

Transmembrane regions (helical) follow at residues 15–34 (TSIS…ALLG), 41–63 (EFGL…DMGF), 83–105 (WLNI…VIAG), 112–134 (LVFL…QYQY), 154–176 (VLSF…YVIS), 294–316 (LALV…ITAV), 321–343 (WLAA…LMNP), 356–378 (LAFY…AVQT), 382–404 (LTVA…WLLA), 411–433 (LSAY…IIAF), and 448–470 (MRLA…KAYP).

This sequence belongs to the polysaccharide synthase family.

It is found in the cell membrane. Its pathway is cell wall biogenesis; teichuronic acid biosynthesis. Might be involved in the translocation of teichuronic acid repeating units from the inner to the outer surface of the membrane. The chain is Teichuronic acid biosynthesis protein TuaB (tuaB) from Bacillus subtilis (strain 168).